The sequence spans 172 residues: Large ribosomal subunit protein bL17 (172 aa).

The disordered stretch occupies residues alanine 153 to glycine 172.

The protein belongs to the bacterial ribosomal protein bL17 family. Part of the 50S ribosomal subunit. Contacts protein L32.

This Sorangium cellulosum (strain So ce56) (Polyangium cellulosum (strain So ce56)) protein is Large ribosomal subunit protein bL17.